Here is a 697-residue protein sequence, read N- to C-terminus: Sialic acid-binding Ig-like lectin 10 (697 aa).

A signal peptide spans 1–16 (MLLPLLLSSLLGGSQA). At 17–550 (MDGRFWIRVQ…KGLISTAFSN (534 aa)) the chain is on the extracellular side. In terms of domain architecture, Ig-like V-type spans 18-121 (DGRFWIRVQE…DESQYFFRVE (104 aa)). Disulfide bonds link Cys36–Cys173, Cys41–Cys101, Cys164–Cys215, and Cys276–Cys323. An N-linked (GlcNAc...) asparagine glycan is attached at Asn100. N-acetylneuraminate is bound at residue Arg119. 3 consecutive Ig-like C2-type domains span residues 146–231 (PDVY…RTVR), 251–339 (PALE…LDLS), and 344–441 (PENL…LSLS). N-linked (GlcNAc...) asparagine glycans are attached at residues Asn355 and Asn364. Cys380 and Cys425 are disulfide-bonded. Asn486 and Asn504 each carry an N-linked (GlcNAc...) asparagine glycan. Residues 551–571 (GAFLGIGITALLFLCLALIIM) traverse the membrane as a helical segment. Residues 572-697 (KILPKRRTQT…QADYAEVKFQ (126 aa)) are Cytoplasmic-facing. An ITIM motif 1 motif is present at residues 595–600 (LDYINV). Residues 606–697 (PLAQKRNQKA…QADYAEVKFQ (92 aa)) form a disordered region. The segment covering 620-629 (PRTPLPPGAP) has biased composition (pro residues). Residues 650–659 (KSSTQAPESQ) show a composition bias toward polar residues. The short motif at 665–670 (LHYATL) is the ITIM motif 2 element. Residue Tyr667 is modified to Phosphotyrosine.

The protein belongs to the immunoglobulin superfamily. SIGLEC (sialic acid binding Ig-like lectin) family. As to quaternary structure, interacts with PTPN6/SHP-1 upon phosphorylation. Interacts with NCF1. Interacts with CD24; the probable CD24:SIGLEC10 complex is proposed to inhibit HGMB1-mediated tissue damage immune response. Interacts with HMGB1; the interaction is dependent on CD24. Interacts with RIGI, CBL and PTPN11. In terms of processing, phosphorylation of Tyr-667 is involved in binding to PTPN6. In terms of tissue distribution, expressed by peripheral blood leukocytes (eosinophils, monocytes and a natural killer cell subpopulation). Isoform 5 is found to be the most abundant isoform. Found in lymph node, lung, ovary and appendix. Isoform 1 is found at high levels and isoform 2 at lower levels in bone marrow, spleen and spinal cord. Isoform 2 is also found in brain. Isoform 4 is specifically found in natural killer cells.

Its subcellular location is the cell membrane. It is found in the secreted. Putative adhesion molecule that mediates sialic-acid dependent binding to cells. Preferentially binds to alpha-2,3- or alpha-2,6-linked sialic acid. The sialic acid recognition site may be masked by cis interactions with sialic acids on the same cell surface. In the immune response, seems to act as an inhibitory receptor upon ligand induced tyrosine phosphorylation by recruiting cytoplasmic phosphatase(s) via their SH2 domain(s) that block signal transduction through dephosphorylation of signaling molecules. Involved in negative regulation of B-cell antigen receptor signaling. The inhibition of B cell activation is dependent on PTPN6/SHP-1. In association with CD24 may be involved in the selective suppression of the immune response to danger-associated molecular patterns (DAMPs) such as HMGB1, HSP70 and HSP90. In association with CD24 may regulate the immune repsonse of natural killer (NK) cells. Plays a role in the control of autoimmunity. During initiation of adaptive immune responses by CD8-alpha(+) dendritic cells inhibits cross-presentation by impairing the formation of MHC class I-peptide complexes. The function seems to implicate recruitment of PTPN6/SHP-1, which dephosphorylates NCF1 of the NADPH oxidase complex consequently promoting phagosomal acidification. In Homo sapiens (Human), this protein is Sialic acid-binding Ig-like lectin 10 (SIGLEC10).